The primary structure comprises 263 residues: Phosphatidylglycerol--prolipoprotein diacylglyceryl transferase (263 aa).

The next 4 helical transmembrane spans lie at 15-35 (ISIH…VYLA), 52-72 (FILL…VIFQ), 83-103 (IFAI…GAAV), and 112-132 (AIAV…AQSI). Residue arginine 134 coordinates a 1,2-diacyl-sn-glycero-3-phospho-(1'-sn-glycerol). 3 helical membrane passes run 170–190 (VPTF…ILGL), 200–220 (GDVT…IEGM), and 230–250 (LRVS…LLYF).

It belongs to the Lgt family.

It is found in the cell membrane. It catalyses the reaction L-cysteinyl-[prolipoprotein] + a 1,2-diacyl-sn-glycero-3-phospho-(1'-sn-glycerol) = an S-1,2-diacyl-sn-glyceryl-L-cysteinyl-[prolipoprotein] + sn-glycerol 1-phosphate + H(+). Its pathway is protein modification; lipoprotein biosynthesis (diacylglyceryl transfer). Functionally, catalyzes the transfer of the diacylglyceryl group from phosphatidylglycerol to the sulfhydryl group of the N-terminal cysteine of a prolipoprotein, the first step in the formation of mature lipoproteins. The polypeptide is Phosphatidylglycerol--prolipoprotein diacylglyceryl transferase (Streptococcus thermophilus (strain ATCC BAA-250 / LMG 18311)).